A 183-amino-acid polypeptide reads, in one-letter code: Transmembrane protein 252 (183 aa).

2 helical membrane passes run 8–28 (ILCALSLLTGFLMICLGGFFI) and 39–59 (LVVAYVLLPMGFVILLSGIFW).

The protein resides in the membrane. The polypeptide is Transmembrane protein 252 (Tmem252) (Mus musculus (Mouse)).